The chain runs to 333 residues: Flap endonuclease 1 (333 aa).

Positions Met1–Arg99 are N-domain. 7 residues coordinate Mg(2+): Asp28, Asp81, Glu153, Glu155, Asp174, Asp176, and Asp235. The I-domain stretch occupies residues Glu117 to Gly256. Residues Gly325–Phe333 are interaction with PCNA.

This sequence belongs to the XPG/RAD2 endonuclease family. FEN1 subfamily. As to quaternary structure, interacts with PCNA. PCNA stimulates the nuclease activity without altering cleavage specificity. The cofactor is Mg(2+).

Functionally, structure-specific nuclease with 5'-flap endonuclease and 5'-3' exonuclease activities involved in DNA replication and repair. During DNA replication, cleaves the 5'-overhanging flap structure that is generated by displacement synthesis when DNA polymerase encounters the 5'-end of a downstream Okazaki fragment. Binds the unpaired 3'-DNA end and kinks the DNA to facilitate 5' cleavage specificity. Cleaves one nucleotide into the double-stranded DNA from the junction in flap DNA, leaving a nick for ligation. Also involved in the base excision repair (BER) pathway. Acts as a genome stabilization factor that prevents flaps from equilibrating into structures that lead to duplications and deletions. Also possesses 5'-3' exonuclease activity on nicked or gapped double-stranded DNA. This chain is Flap endonuclease 1, found in Methanosphaerula palustris (strain ATCC BAA-1556 / DSM 19958 / E1-9c).